A 387-amino-acid polypeptide reads, in one-letter code: EARP-interacting protein homolog (387 aa).

WD repeat units follow at residues 132–172 (SAHG…AKAT), 182–222 (KGQL…QIYC), 226–266 (AHGQ…EPVK), and 270–310 (EHSH…SEPF). The disordered stretch occupies residues 309-337 (PFGHLVDDDDLSDPEENQQEDKGKEPLQD). The segment covering 315–326 (DDDDLSDPEENQ) has biased composition (acidic residues). The stretch at 345-385 (EHEDSVYAVEWSAADPWLFASLSYDGRLVINRVPRALKYRI) is one WD 5 repeat.

It belongs to the WD repeat EIPR1 family.

Its subcellular location is the golgi apparatus. It localises to the trans-Golgi network. Its function is as follows. May act as a component of endosomal retrieval machinery that is involved in protein transport from early endosomes to either recycling endosomes or the trans-Golgi network. This Danio rerio (Zebrafish) protein is EARP-interacting protein homolog.